Consider the following 320-residue polypeptide: Malate dehydrogenase (320 aa).

Residues 10-15 (GAGQIG) and D34 contribute to the NAD(+) site. Substrate is bound by residues R83 and R89. NAD(+)-binding positions include N96 and 119–121 (ITN). Substrate-binding residues include N121 and R152. H176 acts as the Proton acceptor in catalysis.

It belongs to the LDH/MDH superfamily. MDH type 3 family.

The enzyme catalyses (S)-malate + NAD(+) = oxaloacetate + NADH + H(+). In terms of biological role, catalyzes the reversible oxidation of malate to oxaloacetate. The protein is Malate dehydrogenase of Methylorubrum populi (strain ATCC BAA-705 / NCIMB 13946 / BJ001) (Methylobacterium populi).